The following is a 117-amino-acid chain: UPF0295 protein GK0479 (117 aa).

Transmembrane regions (helical) follow at residues 12–32 (IRTF…LGLF) and 42–62 (LFML…FWIG).

The protein belongs to the UPF0295 family.

The protein resides in the cell membrane. This Geobacillus kaustophilus (strain HTA426) protein is UPF0295 protein GK0479.